The following is a 196-amino-acid chain: Large ribosomal subunit protein uL6 (196 aa).

This sequence belongs to the universal ribosomal protein uL6 family. As to quaternary structure, part of the 50S ribosomal subunit.

Its function is as follows. This protein binds to the 23S rRNA, and is important in its secondary structure. It is located near the subunit interface in the base of the L7/L12 stalk, and near the tRNA binding site of the peptidyltransferase center. The protein is Large ribosomal subunit protein uL6 of Pyrobaculum aerophilum (strain ATCC 51768 / DSM 7523 / JCM 9630 / CIP 104966 / NBRC 100827 / IM2).